Consider the following 543-residue polypeptide: Probable protein kinase UbiB (543 aa).

The Protein kinase domain occupies 123–501 (DFDSQALASA…GSRQGRARYL (379 aa)). ATP is bound by residues 129–137 (LASASIAQV) and Lys-152. Asp-287 acts as the Proton acceptor in catalysis. The helical transmembrane segment at 517–537 (MVNIALWPIGLYVAGGVIWLA) threads the bilayer.

The protein belongs to the ABC1 family. UbiB subfamily.

The protein resides in the cell inner membrane. Its pathway is cofactor biosynthesis; ubiquinone biosynthesis [regulation]. In terms of biological role, is probably a protein kinase regulator of UbiI activity which is involved in aerobic coenzyme Q (ubiquinone) biosynthesis. This chain is Probable protein kinase UbiB, found in Edwardsiella ictaluri (strain 93-146).